We begin with the raw amino-acid sequence, 142 residues long: Transcriptional regulator MraZ (142 aa).

SpoVT-AbrB domains are found at residues Ala5–Glu51 and Ala77–Thr120.

Belongs to the MraZ family. In terms of assembly, forms oligomers.

Its subcellular location is the cytoplasm. It localises to the nucleoid. The sequence is that of Transcriptional regulator MraZ from Delftia acidovorans (strain DSM 14801 / SPH-1).